We begin with the raw amino-acid sequence, 150 residues long: SPbeta prophage-derived uncharacterized protein YoqH (150 aa).

The first 23 residues, 1–23 (MKRFILVLSFLSIIVAYPIQTNA), serve as a signal peptide directing secretion.

The sequence is that of SPbeta prophage-derived uncharacterized protein YoqH (yoqH) from Bacillus subtilis (strain 168).